Here is a 338-residue protein sequence, read N- to C-terminus: Ketol-acid reductoisomerase (NADP(+)) (338 aa).

One can recognise a KARI N-terminal Rossmann domain in the interval 1 to 181 (MKVFYDKDCD…GGGRTGIIET (181 aa)). Residues 24 to 27 (YGSQ), R47, S50, T52, and 82 to 85 (DEFQ) each bind NADP(+). Residue H107 is part of the active site. G133 is an NADP(+) binding site. Positions 182-327 (TFKDETETDL…EKLRSMMPWI (146 aa)) constitute a KARI C-terminal knotted domain. The Mg(2+) site is built by D190, E194, E226, and E230. Substrate is bound at residue S251.

This sequence belongs to the ketol-acid reductoisomerase family. The cofactor is Mg(2+).

The catalysed reaction is (2R)-2,3-dihydroxy-3-methylbutanoate + NADP(+) = (2S)-2-acetolactate + NADPH + H(+). It catalyses the reaction (2R,3R)-2,3-dihydroxy-3-methylpentanoate + NADP(+) = (S)-2-ethyl-2-hydroxy-3-oxobutanoate + NADPH + H(+). The protein operates within amino-acid biosynthesis; L-isoleucine biosynthesis; L-isoleucine from 2-oxobutanoate: step 2/4. It functions in the pathway amino-acid biosynthesis; L-valine biosynthesis; L-valine from pyruvate: step 2/4. In terms of biological role, involved in the biosynthesis of branched-chain amino acids (BCAA). Catalyzes an alkyl-migration followed by a ketol-acid reduction of (S)-2-acetolactate (S2AL) to yield (R)-2,3-dihydroxy-isovalerate. In the isomerase reaction, S2AL is rearranged via a Mg-dependent methyl migration to produce 3-hydroxy-3-methyl-2-ketobutyrate (HMKB). In the reductase reaction, this 2-ketoacid undergoes a metal-dependent reduction by NADPH to yield (R)-2,3-dihydroxy-isovalerate. In Pseudomonas syringae pv. tomato (strain ATCC BAA-871 / DC3000), this protein is Ketol-acid reductoisomerase (NADP(+)).